Consider the following 290-residue polypeptide: D-tagatose-1,6-bisphosphate aldolase subunit KbaY (290 aa).

The active-site Proton donor is the D82. H83 and H180 together coordinate Zn(2+). G181 contacts dihydroxyacetone phosphate. Residue H208 coordinates Zn(2+). Dihydroxyacetone phosphate-binding positions include 209-211 (GAS) and 230-233 (NVAT).

It belongs to the class II fructose-bisphosphate aldolase family. TagBP aldolase KbaY subfamily. Homotetramer. Forms a complex with KbaZ. Zn(2+) is required as a cofactor.

It carries out the reaction D-tagatofuranose 1,6-bisphosphate = D-glyceraldehyde 3-phosphate + dihydroxyacetone phosphate. Its pathway is carbohydrate metabolism; D-tagatose 6-phosphate degradation; D-glyceraldehyde 3-phosphate and glycerone phosphate from D-tagatose 6-phosphate: step 2/2. In terms of biological role, catalytic subunit of the tagatose-1,6-bisphosphate aldolase KbaYZ, which catalyzes the reversible aldol condensation of dihydroxyacetone phosphate (DHAP or glycerone-phosphate) with glyceraldehyde 3-phosphate (G3P) to produce tagatose 1,6-bisphosphate (TBP). Requires KbaZ subunit for full activity and stability. The chain is D-tagatose-1,6-bisphosphate aldolase subunit KbaY from Citrobacter koseri (strain ATCC BAA-895 / CDC 4225-83 / SGSC4696).